Reading from the N-terminus, the 246-residue chain is tRNA (guanine-N(1)-)-methyltransferase (246 aa).

S-adenosyl-L-methionine is bound by residues G114 and 133 to 138; that span reads LGDYVL.

It belongs to the RNA methyltransferase TrmD family. In terms of assembly, homodimer.

It is found in the cytoplasm. It catalyses the reaction guanosine(37) in tRNA + S-adenosyl-L-methionine = N(1)-methylguanosine(37) in tRNA + S-adenosyl-L-homocysteine + H(+). Specifically methylates guanosine-37 in various tRNAs. The chain is tRNA (guanine-N(1)-)-methyltransferase from Enterococcus faecalis (strain ATCC 700802 / V583).